The sequence spans 87 residues: LYR motif-containing protein 2 (87 aa).

A mitochondrion-targeting transit peptide spans 1–19 (MGSRLPPAALTLKQFLVRQ).

This sequence belongs to the complex I LYR family.

It is found in the mitochondrion. In terms of biological role, involved in efficient integration of the N-module into mitochondrial respiratory chain complex I. The sequence is that of LYR motif-containing protein 2 (lyrm2) from Xenopus tropicalis (Western clawed frog).